The primary structure comprises 264 residues: Type III pantothenate kinase 2 (264 aa).

6-13 (DVGNTFTV) contributes to the ATP binding site. Substrate-binding positions include Y100 and 107–110 (GADR). D109 (proton acceptor) is an active-site residue. K(+) is bound at residue D129. T132 provides a ligand contact to ATP. Residue T184 coordinates substrate.

Belongs to the type III pantothenate kinase family. In terms of assembly, homodimer. Requires NH4(+) as cofactor. K(+) is required as a cofactor.

Its subcellular location is the cytoplasm. The catalysed reaction is (R)-pantothenate + ATP = (R)-4'-phosphopantothenate + ADP + H(+). Its pathway is cofactor biosynthesis; coenzyme A biosynthesis; CoA from (R)-pantothenate: step 1/5. In terms of biological role, catalyzes the phosphorylation of pantothenate (Pan), the first step in CoA biosynthesis. This chain is Type III pantothenate kinase 2, found in Symbiobacterium thermophilum (strain DSM 24528 / JCM 14929 / IAM 14863 / T).